Consider the following 197-residue polypeptide: Imidazoleglycerol-phosphate dehydratase (197 aa).

It belongs to the imidazoleglycerol-phosphate dehydratase family.

Its subcellular location is the cytoplasm. The catalysed reaction is D-erythro-1-(imidazol-4-yl)glycerol 3-phosphate = 3-(imidazol-4-yl)-2-oxopropyl phosphate + H2O. The protein operates within amino-acid biosynthesis; L-histidine biosynthesis; L-histidine from 5-phospho-alpha-D-ribose 1-diphosphate: step 6/9. This Syntrophus aciditrophicus (strain SB) protein is Imidazoleglycerol-phosphate dehydratase.